The following is a 107-amino-acid chain: Large ribosomal subunit protein uL24 (107 aa).

It belongs to the universal ribosomal protein uL24 family. As to quaternary structure, part of the 50S ribosomal subunit.

Functionally, one of two assembly initiator proteins, it binds directly to the 5'-end of the 23S rRNA, where it nucleates assembly of the 50S subunit. One of the proteins that surrounds the polypeptide exit tunnel on the outside of the subunit. The chain is Large ribosomal subunit protein uL24 from Mycobacterium ulcerans (strain Agy99).